The sequence spans 1196 residues: ATP-dependent helicase/deoxyribonuclease subunit B (1196 aa).

Positions 823, 1149, 1152, and 1158 each coordinate [4Fe-4S] cluster.

Belongs to the helicase family. AddB/RexB type 2 subfamily. As to quaternary structure, heterodimer of AddA and RexB. It depends on Mg(2+) as a cofactor. Requires [4Fe-4S] cluster as cofactor.

Its function is as follows. The heterodimer acts as both an ATP-dependent DNA helicase and an ATP-dependent, dual-direction single-stranded exonuclease. Recognizes the chi site generating a DNA molecule suitable for the initiation of homologous recombination. This subunit has 5' -&gt; 3' nuclease activity but not helicase activity. The protein is ATP-dependent helicase/deoxyribonuclease subunit B of Enterococcus faecalis (strain ATCC 700802 / V583).